Consider the following 159-residue polypeptide: UPF0303 protein Ping_1243 (159 aa).

This sequence belongs to the UPF0303 family.

The chain is UPF0303 protein Ping_1243 from Psychromonas ingrahamii (strain DSM 17664 / CCUG 51855 / 37).